Here is a 202-residue protein sequence, read N- to C-terminus: Recoverin (202 aa).

Gly2 carries the N-myristoyl glycine lipid modification. Cys39 bears the Cysteine sulfenic acid (-SOH) mark. EF-hand domains lie at 41-59 (SGRITRQEFESIYSKFFPD), 61-96 (DPKAYAQHVFRSFDANSDGTLDFKEYVIALHMTTAG), 97-132 (KPTQKLEWAFSLYDVDGNGTISKNEVLEIVMAIFKM), and 147-182 (TPEKRAEKIWAFFGKKEDDKLTEEEFIEGTLANKEI). 10 residues coordinate Ca(2+): Asp74, Asn76, Asp78, Thr80, Glu85, Asp110, Asp112, Asn114, Thr116, and Glu121. Residues 189–192 (EPQK) form an interaction with GRK1 region.

Belongs to the recoverin family. In terms of assembly, homodimer; disulfide-linked. Homodimerization is caused by prolonged intense illumination. May form a complex composed of RHO, GRK1 and RCVRN in a Ca(2+)-dependent manner; RCVRN prevents the interaction between GRK1 and RHO. Interacts (via C-terminus) with GRK1 (via N-terminus); the interaction is Ca(2+)-dependent. Post-translationally, the N-terminal glycine is linked to one of four different types of acyl groups. The most abundant is myristoleate (14:1), but 14:0, 14:2, and 12:0 acyl residues are also present. The Ca(2+) induced exposure of the myristoyl group, known as the calcium-myristoyl switch, promotes RCVRN binding to the photoreceptor cell membranes only when intracellular Ca(2+) concentration is high. Oxidation on Cys-39 occurs in response to prolonged intense illumination and results in the formation of disulfide homodimers, and to a lesser extent disulfide-linked heterodimers. In terms of tissue distribution, expressed in rod photoreceptors in the retina (at protein level).

It is found in the photoreceptor inner segment. Its subcellular location is the cell projection. The protein resides in the cilium. It localises to the photoreceptor outer segment. The protein localises to the photoreceptor outer segment membrane. It is found in the perikaryon. Acts as a calcium sensor and regulates phototransduction of cone and rod photoreceptor cells. Modulates light sensitivity of cone photoreceptor in dark and dim conditions. In response to high Ca(2+) levels induced by low light levels, prolongs RHO/rhodopsin activation in rod photoreceptor cells by binding to and inhibiting GRK1-mediated phosphorylation of RHO/rhodopsin. Plays a role in scotopic vision/enhances vision in dim light by enhancing signal transfer between rod photoreceptors and rod bipolar cells. Improves rod photoreceptor sensitivity in dim light and mediates response of rod photoreceptors to facilitate detection of change and motion in bright light. This Mus musculus (Mouse) protein is Recoverin (Rcvrn).